The primary structure comprises 231 residues: Large ribosomal subunit protein uL1 (231 aa).

It belongs to the universal ribosomal protein uL1 family. As to quaternary structure, part of the 50S ribosomal subunit.

Functionally, binds directly to 23S rRNA. The L1 stalk is quite mobile in the ribosome, and is involved in E site tRNA release. Protein L1 is also a translational repressor protein, it controls the translation of the L11 operon by binding to its mRNA. This chain is Large ribosomal subunit protein uL1, found in Staphylococcus carnosus (strain TM300).